A 425-amino-acid chain; its full sequence is UPF0229 protein ETA_15540 (425 aa).

The interval 60–111 is disordered; it reads NEPSFHQGRGGERYRVHPGNDHFVQNDRVDRPQGGGAGGSGQGNAGKDGEGQ. Basic and acidic residues predominate over residues 68-90; that stretch reads RGGERYRVHPGNDHFVQNDRVDR. Over residues 92-105 the composition is skewed to gly residues; sequence QGGGAGGSGQGNAG.

The protein belongs to the UPF0229 family.

This Erwinia tasmaniensis (strain DSM 17950 / CFBP 7177 / CIP 109463 / NCPPB 4357 / Et1/99) protein is UPF0229 protein ETA_15540.